A 209-amino-acid polypeptide reads, in one-letter code: Probable nicotinate-nucleotide adenylyltransferase (209 aa).

It belongs to the NadD family.

The catalysed reaction is nicotinate beta-D-ribonucleotide + ATP + H(+) = deamido-NAD(+) + diphosphate. It functions in the pathway cofactor biosynthesis; NAD(+) biosynthesis; deamido-NAD(+) from nicotinate D-ribonucleotide: step 1/1. Its function is as follows. Catalyzes the reversible adenylation of nicotinate mononucleotide (NaMN) to nicotinic acid adenine dinucleotide (NaAD). The sequence is that of Probable nicotinate-nucleotide adenylyltransferase from Idiomarina loihiensis (strain ATCC BAA-735 / DSM 15497 / L2-TR).